The chain runs to 556 residues: Peptide chain release factor 3 (556 aa).

The tr-type G domain maps to 28-297 (QQRRNFAIIS…AFLDYALKPG (270 aa)). GTP contacts are provided by residues 37–44 (SHPDAGKT), 105–109 (DTPGH), and 159–162 (NKMD).

This sequence belongs to the TRAFAC class translation factor GTPase superfamily. Classic translation factor GTPase family. PrfC subfamily.

It localises to the cytoplasm. Increases the formation of ribosomal termination complexes and stimulates activities of RF-1 and RF-2. It binds guanine nucleotides and has strong preference for UGA stop codons. It may interact directly with the ribosome. The stimulation of RF-1 and RF-2 is significantly reduced by GTP and GDP, but not by GMP. This chain is Peptide chain release factor 3, found in Synechococcus elongatus (strain ATCC 33912 / PCC 7942 / FACHB-805) (Anacystis nidulans R2).